The chain runs to 815 residues: Translation initiation factor IF-2 (815 aa).

Basic and acidic residues predominate over residues 153-176 (VQEKEAEKKVEKLKTADKPKEGNK). Residues 153 to 219 (VQEKEAEKKV…THLSQKIQAE (67 aa)) are disordered. Positions 191–209 (KQLHVARHNPNRRLKKKDR) are enriched in basic residues. Residues 315-482 (ARPPIVTIMG…AISLTAEILE (168 aa)) form the tr-type G domain. Residues 324 to 331 (GHVDHGKT) form a G1 region. Residue 324-331 (GHVDHGKT) coordinates GTP. The G2 stretch occupies residues 349-353 (GITQH). A G3 region spans residues 370–373 (DTPG). GTP contacts are provided by residues 370–374 (DTPGH) and 424–427 (NKID). The tract at residues 424 to 427 (NKID) is G4. Positions 460-462 (SAH) are G5.

Belongs to the TRAFAC class translation factor GTPase superfamily. Classic translation factor GTPase family. IF-2 subfamily.

Its subcellular location is the cytoplasm. One of the essential components for the initiation of protein synthesis. Protects formylmethionyl-tRNA from spontaneous hydrolysis and promotes its binding to the 30S ribosomal subunits. Also involved in the hydrolysis of GTP during the formation of the 70S ribosomal complex. This Vesicomyosocius okutanii subsp. Calyptogena okutanii (strain HA) protein is Translation initiation factor IF-2.